Consider the following 461-residue polypeptide: Cysteine--tRNA ligase (461 aa).

Residue Cys28 participates in Zn(2+) binding. The 'HIGH' region signature appears at Ile30–His40. Residues Cys209, His234, and Glu238 each contribute to the Zn(2+) site. A 'KMSKS' region motif is present at residues Lys266–Ser270. Lys269 contacts ATP.

This sequence belongs to the class-I aminoacyl-tRNA synthetase family. In terms of assembly, monomer. Requires Zn(2+) as cofactor.

It is found in the cytoplasm. It catalyses the reaction tRNA(Cys) + L-cysteine + ATP = L-cysteinyl-tRNA(Cys) + AMP + diphosphate. This chain is Cysteine--tRNA ligase, found in Yersinia pseudotuberculosis serotype IB (strain PB1/+).